We begin with the raw amino-acid sequence, 291 residues long: Small ribosomal subunit biogenesis GTPase RsgA (291 aa).

One can recognise a CP-type G domain in the interval 63–221; that stretch reads KNELKRPPVS…IADTPGFSAL (159 aa). Residues 112–115 and 164–172 each bind GTP; these read TKKD and GQSGVGKST. Positions 245, 250, 252, and 258 each coordinate Zn(2+).

It belongs to the TRAFAC class YlqF/YawG GTPase family. RsgA subfamily. Monomer. Associates with 30S ribosomal subunit, binds 16S rRNA. The cofactor is Zn(2+).

The protein resides in the cytoplasm. Its function is as follows. One of several proteins that assist in the late maturation steps of the functional core of the 30S ribosomal subunit. Helps release RbfA from mature subunits. May play a role in the assembly of ribosomal proteins into the subunit. Circularly permuted GTPase that catalyzes slow GTP hydrolysis, GTPase activity is stimulated by the 30S ribosomal subunit. The sequence is that of Small ribosomal subunit biogenesis GTPase RsgA from Staphylococcus aureus (strain MRSA252).